We begin with the raw amino-acid sequence, 156 residues long: MARKGHIGKRDVLPDPVYNSKVVTKLINNIMKDGKKGVAQKICYGAFDIIEQKTSKEPMEVFEEAMNNIMPLLEVKARRIGGATYQVPIEVRPERRQTLGIRWLLVASRKRGEKYMRERLAAELMDAANNTGTAVKKREDTHKMAEANKAFAHYRY.

The protein belongs to the universal ribosomal protein uS7 family. Part of the 30S ribosomal subunit. Contacts proteins S9 and S11.

Its function is as follows. One of the primary rRNA binding proteins, it binds directly to 16S rRNA where it nucleates assembly of the head domain of the 30S subunit. Is located at the subunit interface close to the decoding center, probably blocks exit of the E-site tRNA. The chain is Small ribosomal subunit protein uS7 from Clostridium kluyveri (strain NBRC 12016).